The chain runs to 388 residues: MTDRVALRAGVPPFYVMDVWLAAAERQRTHGDLVNLSAGQPSAGAPEPVRAAAAAALHLNQLGYSVALGIPELRDAIAADYQRRHGITVEPDAVVITTGSSGGFLLAFLACFDAGDRVAMASPGYPCYRNILSALGCEVVEIPCGPQTRFQPTAQMLAEIDPPLRGVVVASPANPTGTVIPPEELAAIASWCDASDVRLISDEVYHGLVYQGAPQTSCAWQTSRNAVVVNSFSKYYAMTGWRLGWLLVPTVLRRAVDCLTGNFTICPPVLSQIAAVSAFTPEATAEADGNLASYAINRSLLLDGLRRIGIDRLAPTDGAFYVYADVSDFTSDSLAFCSKLLADTGVAIAPGIDFDTARGGSFVRISFAGPSGDIEEALRRIGSWLPSQ.

N6-(pyridoxal phosphate)lysine is present on K234.

Belongs to the class-I pyridoxal-phosphate-dependent aminotransferase family. It depends on pyridoxal 5'-phosphate as a cofactor.

It carries out the reaction L-valine + pyruvate = 3-methyl-2-oxobutanoate + L-alanine. The chain is Valine--pyruvate aminotransferase from Mycobacterium tuberculosis (strain ATCC 25618 / H37Rv).